The chain runs to 113 residues: TYRO protein tyrosine kinase-binding protein (113 aa).

The signal sequence occupies residues 1–21 (MGGLEPCSRLLLLPLLLAVSG). At 22–40 (LRPVQAQAQSDCSCSTVSP) the chain is on the extracellular side. Residues 41 to 61 (GVLAGIVMGDLVLTVLIALAV) form a helical membrane-spanning segment. Residue D50 coordinates Ca(2+). The Cytoplasmic segment spans residues 62–113 (YFLGRLVPRGRGAAEAATRKQRITETESPYQELQGQRSDVYSDLNTQRPYYK). The disordered stretch occupies residues 75-113 (AEAATRKQRITETESPYQELQGQRSDVYSDLNTQRPYYK). One can recognise an ITAM domain in the interval 80 to 108 (RKQRITETESPYQELQGQRSDVYSDLNTQ). The span at 87-113 (TESPYQELQGQRSDVYSDLNTQRPYYK) shows a compositional bias: polar residues. Y91 and Y102 each carry phosphotyrosine.

Belongs to the TYROBP family. Homodimer; disulfide-linked. Homotrimer; disulfide-linked. Homotetramer; disulfide-linked. Homotrimers and homotetramers form when low levels of partner receptors are available and are competitive with assembly with interacting receptors. They may represent alternative oligomerization states or may be intermediates in the receptor assembly process. Binding of a metal cation aids in homooligomerization through coordination of the metal ion by the subunits of the oligomer. Interacts with TREM1. Interacts with TREM2. Interacts with SIRPB1. Interacts with CLECSF5. Interacts with SIGLEC14. Interacts with CD300LB and CD300E. Interacts with CD300C2. Interacts (via ITAM domain) with SYK (via SH2 domains); activates SYK mediating neutrophil and macrophage integrin-mediated activation. Interacts with KLRC2, KIR2DS3 and KIR2DS5. Interacts with CD300H. Interacts with KIR2DS1. Interacts with KLRD1. Interacts with SIGLEC1. Following ligand binding by associated receptors, tyrosine phosphorylated in the ITAM domain which leads to activation of additional tyrosine kinases and subsequent cell activation. As to expression, expressed at low levels in the early development of the hematopoietic system and in the promonocytic stage and at high levels in mature monocytes. Expressed in hematological cells and tissues such as peripheral blood leukocytes and spleen. Also found in bone marrow, lymph nodes, placenta, lung and liver. Expressed at lower levels in different parts of the brain especially in the basal ganglia and corpus callosum.

It is found in the cell membrane. In terms of biological role, adapter protein which non-covalently associates with activating receptors found on the surface of a variety of immune cells to mediate signaling and cell activation following ligand binding by the receptors. TYROBP is tyrosine-phosphorylated in the ITAM domain following ligand binding by the associated receptors which leads to activation of additional tyrosine kinases and subsequent cell activation. Also has an inhibitory role in some cells. Non-covalently associates with activating receptors of the CD300 family to mediate cell activation. Also mediates cell activation through association with activating receptors of the CD200R family. Required for neutrophil activation mediated by integrin. Required for the activation of myeloid cells mediated by the CLEC5A/MDL1 receptor. Associates with natural killer (NK) cell receptors such as KIR2DS2 and the KLRD1/KLRC2 heterodimer to mediate NK cell activation. Also enhances trafficking and cell surface expression of NK cell receptors KIR2DS1, KIR2DS2 and KIR2DS4 and ensures their stability at the cell surface. Associates with SIRPB1 to mediate activation of myeloid cells such as monocytes and dendritic cells. Associates with TREM1 to mediate activation of neutrophils and monocytes. Associates with TREM2 on monocyte-derived dendritic cells to mediate up-regulation of chemokine receptor CCR7 and dendritic cell maturation and survival. Association with TREM2 mediates cytokine-induced formation of multinucleated giant cells which are formed by the fusion of macrophages. Stabilizes the TREM2 C-terminal fragment (TREM2-CTF) produced by TREM2 ectodomain shedding which suppresses the release of pro-inflammatory cytokines. In microglia, required with TREM2 for phagocytosis of apoptotic neurons. Required with ITGAM/CD11B in microglia to control production of microglial superoxide ions which promote the neuronal apoptosis that occurs during brain development. Promotes pro-inflammatory responses in microglia following nerve injury which accelerates degeneration of injured neurons. Positively regulates the expression of the IRAK3/IRAK-M kinase and IL10 production by liver dendritic cells and inhibits their T cell allostimulatory ability. Negatively regulates B cell proliferation. Required for CSF1-mediated osteoclast cytoskeletal organization. Positively regulates multinucleation during osteoclast development. The sequence is that of TYRO protein tyrosine kinase-binding protein from Homo sapiens (Human).